The primary structure comprises 590 residues: J protein JJJ1 (590 aa).

The 70-residue stretch at 3 to 72 (TCYYELLGVE…RAWYDSHKEQ (70 aa)) folds into the J domain. Over residues 269-284 (EQRKLKEQQRKNELNN) the composition is skewed to basic and acidic residues. A disordered region spans residues 269–293 (EQRKLKEQQRKNELNNRRKFGNDNN). The C2H2-type 1 zinc-finger motif lies at 338-362 (YECFICNKTFKSEKQLKNHINTKLH). Ser-393 is subject to Phosphoserine. The tract at residues 441 to 546 (EVEDVSSDEN…TLPSSMSPTS (106 aa)) is disordered. Over residues 455-467 (TKNKKKRKKKKKA) the composition is skewed to basic residues. Residues 480 to 489 (DDTKDKRSNE) are compositionally biased toward basic and acidic residues. Residue Thr-504 is modified to Phosphothreonine. A compositionally biased stretch (basic residues) spans 513-527 (KAKKKKGKQPKKNSK). Low complexity predominate over residues 528–546 (STKSTPSLSTLPSSMSPTS). Residues 549-573 (EVCTTCGESFDSRNKLFNHVKIAGH) form a C2H2-type 2 zinc finger.

The protein resides in the nucleus. This chain is J protein JJJ1 (JJJ1), found in Saccharomyces cerevisiae (strain ATCC 204508 / S288c) (Baker's yeast).